The sequence spans 439 residues: SH3 domain-containing protein 1 (439 aa).

The 232-residue stretch at 32 to 263 folds into the BAR domain; it reads DAVVVDEEEL…MIAEEEAIGS (232 aa). The span at 277 to 291 shows a compositional bias: polar residues; it reads SLPQQEPNSNSSGEI. The interval 277–362 is disordered; the sequence is SLPQQEPNSN…SDDHHNHQLL (86 aa). Residues 318 to 358 show a composition bias toward basic and acidic residues; the sequence is SPKDEMKSSPQEETKSNHQKEIKSSPQEEIKKSNGSDDHHN. An SH3 domain is found at 366 to 425; that stretch reads DSYFLAKVVHPFDAQAPGELSLAVDDYVIVRQVAGTGWSEGEYKGKAGWFPSAYVEKQEK.

In terms of assembly, interacts with the auxilin-like protein AUXI1. In terms of tissue distribution, highly expressed in flowers. Detected in seedlings, roots, leaves and stems.

Its subcellular location is the cytoplasmic vesicle. The protein resides in the clathrin-coated vesicle. It is found in the cell membrane. It localises to the golgi apparatus. The protein localises to the trans-Golgi network. Its subcellular location is the endoplasmic reticulum. Lipid binding protein bound strongly to phosphatidic acid, phosphatidylinositol-4-phosphate and phosphatidylinositol-4,5-bisphosphate. Binds actin in vitro. Involved in trafficking and modification of clathrin-coated vesicles. The polypeptide is SH3 domain-containing protein 1 (SH3P1) (Arabidopsis thaliana (Mouse-ear cress)).